The following is a 398-amino-acid chain: Serpin-Z2B (398 aa).

Positions 343-367 (GTEAAATTIAKVVLRQAPPPSVLDF) are RCL.

It belongs to the serpin family.

Its function is as follows. Inhibits chymotrypsin, cathepsin G and trypsin in vitro. The protein is Serpin-Z2B of Triticum aestivum (Wheat).